A 621-amino-acid chain; its full sequence is Chaperone protein HtpG (621 aa).

An a; substrate-binding region spans residues 1–328; sequence MTQEKKKFDA…SEDLPLNISR (328 aa). The tract at residues 329 to 544 is b; the sequence is ESLQHNNVLE…DTAMDIRMER (216 aa). Residues 545-621 are c; the sequence is FLIEQKQIAN…LNDILQKAIL (77 aa).

This sequence belongs to the heat shock protein 90 family. As to quaternary structure, homodimer.

The protein resides in the cytoplasm. Functionally, molecular chaperone. Has ATPase activity. The polypeptide is Chaperone protein HtpG (Rickettsia prowazekii (strain Madrid E)).